The sequence spans 212 residues: uncharacterized protein (212 aa).

A helical transmembrane segment spans residues 186–206 (VITLISFMLFSILFFLIFLIV).

It localises to the membrane. This is an uncharacterized protein from Mycoplasma genitalium (strain ATCC 33530 / DSM 19775 / NCTC 10195 / G37) (Mycoplasmoides genitalium).